Here is a 202-residue protein sequence, read N- to C-terminus: N-acetyltransferase 9-like protein (202 aa).

Residues 34 to 184 enclose the N-acetyltransferase domain; the sequence is EEIRRLTGSE…FTFELPKNRL (151 aa).

Belongs to the acetyltransferase family. GNAT subfamily.

The chain is N-acetyltransferase 9-like protein from Caenorhabditis elegans.